Here is a 629-residue protein sequence, read N- to C-terminus: MAKNGGAHGAATLFGLLALASMVKLGFVAGGGHDYAMALRKSILYFQAQRSGVLPPNQRVSWRASSGLFDGKANGVDLVGGYYDAGDNVKFGLPMAFTVTMMSWSILEYGKQMAAAGELRNAMDAVKWGTDYFIKAHPEPDVLYGEVGDGDTDHSCWQRPEDMTTSRQAFRVDPQHPGSDLAAETAAAMAAASIVFRGTYPGYANLLLVHSKQLFEFADKYRGKYDASITVARNYYGSFSGYGDELLWAAAWLFEATEDRSYLEYLAGNGEALGGTGWSINQFGWDVKYPGVQVLAAKFLLQGRAGDHAAALQRYRQNAEFFVCSCVGKGAVNVARTPGGMMYHQRWNNLQFVTSASFLLTVYADFAAISGRGAVHCPAGAAQPFDILKFVKSQVNYILGDNPRGTSYMVGYGASYPRQVHHRGASIVSIKRDPSFVSCQEGYSSWYGREAGNPNLLDGAVVGGPDEYDDFADERDNYEQTEAATYNNAPLLGVLARLAASCGGLKEEEYEQETATPVVNRTSSSSSLPATATAIGIEQNVTGTWARRRRTYYRYAVTVTNRSRGKTVRELHLGVSGLRGRLWGLEEARYGYVPPRWLPALRPGRSLRFVYVQPAPAPANIWVTGYKLV.

The first 30 residues, 1-30, serve as a signal peptide directing secretion; that stretch reads MAKNGGAHGAATLFGLLALASMVKLGFVAG. Asp-87 serves as the catalytic Nucleophile. Residues His-421, Asp-473, and Glu-482 contribute to the active site. Asn-520, Asn-540, and Asn-561 each carry an N-linked (GlcNAc...) asparagine glycan.

Belongs to the glycosyl hydrolase 9 (cellulase E) family.

It localises to the secreted. It catalyses the reaction Endohydrolysis of (1-&gt;4)-beta-D-glucosidic linkages in cellulose, lichenin and cereal beta-D-glucans.. The sequence is that of Endoglucanase 15 from Oryza sativa subsp. japonica (Rice).